Consider the following 259-residue polypeptide: UPF0246 protein PFL_1025 (259 aa).

The protein belongs to the UPF0246 family.

This chain is UPF0246 protein PFL_1025, found in Pseudomonas fluorescens (strain ATCC BAA-477 / NRRL B-23932 / Pf-5).